The primary structure comprises 324 residues: Glyoxylate/hydroxypyruvate reductase B (324 aa).

Catalysis depends on residues Arg-237 and Glu-266. His-285 (proton donor) is an active-site residue.

Belongs to the D-isomer specific 2-hydroxyacid dehydrogenase family. GhrB subfamily. In terms of assembly, homodimer.

The protein resides in the cytoplasm. The enzyme catalyses glycolate + NADP(+) = glyoxylate + NADPH + H(+). The catalysed reaction is (R)-glycerate + NAD(+) = 3-hydroxypyruvate + NADH + H(+). It catalyses the reaction (R)-glycerate + NADP(+) = 3-hydroxypyruvate + NADPH + H(+). Functionally, catalyzes the NADPH-dependent reduction of glyoxylate and hydroxypyruvate into glycolate and glycerate, respectively. The polypeptide is Glyoxylate/hydroxypyruvate reductase B (Escherichia coli (strain ATCC 8739 / DSM 1576 / NBRC 3972 / NCIMB 8545 / WDCM 00012 / Crooks)).